A 569-amino-acid chain; its full sequence is Adenine deaminase (569 aa).

The protein belongs to the metallo-dependent hydrolases superfamily. Adenine deaminase family. It depends on Mn(2+) as a cofactor.

It catalyses the reaction adenine + H2O + H(+) = hypoxanthine + NH4(+). The protein is Adenine deaminase of Desulfatibacillum aliphaticivorans.